The chain runs to 145 residues: AP-2 complex subunit sigma (145 aa).

Belongs to the adaptor complexes small subunit family. As to quaternary structure, adaptor protein complex 2 (AP-2) is a heterotetramer composed of two large adaptins (alpha-type subunit apl3 and beta-type subunit apl1), a medium chain (mu-type subunit apm4) and a small adaptin (sigma-type subunit aps2).

It localises to the cell membrane. It is found in the membrane. The protein localises to the coated pit. Component of the adaptor complexes which link clathrin to receptors in coated vesicles. Clathrin-associated protein complexes are believed to interact with the cytoplasmic tails of membrane proteins, leading to their selection and concentration. This is AP-2 complex subunit sigma (aps2) from Emericella nidulans (strain FGSC A4 / ATCC 38163 / CBS 112.46 / NRRL 194 / M139) (Aspergillus nidulans).